The sequence spans 83 residues: Putative membrane protein insertion efficiency factor (83 aa).

This sequence belongs to the UPF0161 family.

It localises to the cell inner membrane. Could be involved in insertion of integral membrane proteins into the membrane. The polypeptide is Putative membrane protein insertion efficiency factor (Pelagibacter ubique (strain HTCC1062)).